We begin with the raw amino-acid sequence, 156 residues long: ATP synthase subunit b 1 (156 aa).

Residues 7–29 form a helical membrane-spanning segment; that stretch reads LLGQAISFALFVWFCMKYVWPPL.

Belongs to the ATPase B chain family. In terms of assembly, F-type ATPases have 2 components, F(1) - the catalytic core - and F(0) - the membrane proton channel. F(1) has five subunits: alpha(3), beta(3), gamma(1), delta(1), epsilon(1). F(0) has three main subunits: a(1), b(2) and c(10-14). The alpha and beta chains form an alternating ring which encloses part of the gamma chain. F(1) is attached to F(0) by a central stalk formed by the gamma and epsilon chains, while a peripheral stalk is formed by the delta and b chains.

It is found in the cell inner membrane. F(1)F(0) ATP synthase produces ATP from ADP in the presence of a proton or sodium gradient. F-type ATPases consist of two structural domains, F(1) containing the extramembraneous catalytic core and F(0) containing the membrane proton channel, linked together by a central stalk and a peripheral stalk. During catalysis, ATP synthesis in the catalytic domain of F(1) is coupled via a rotary mechanism of the central stalk subunits to proton translocation. Its function is as follows. Component of the F(0) channel, it forms part of the peripheral stalk, linking F(1) to F(0). This is ATP synthase subunit b 1 from Vibrio campbellii (strain ATCC BAA-1116).